A 489-amino-acid polypeptide reads, in one-letter code: Glutamyl-tRNA(Gln) amidotransferase subunit A (489 aa).

Residues K75 and S150 each act as charge relay system in the active site. The active-site Acyl-ester intermediate is the S174.

The protein belongs to the amidase family. GatA subfamily. Heterotrimer of A, B and C subunits.

The enzyme catalyses L-glutamyl-tRNA(Gln) + L-glutamine + ATP + H2O = L-glutaminyl-tRNA(Gln) + L-glutamate + ADP + phosphate + H(+). Allows the formation of correctly charged Gln-tRNA(Gln) through the transamidation of misacylated Glu-tRNA(Gln) in organisms which lack glutaminyl-tRNA synthetase. The reaction takes place in the presence of glutamine and ATP through an activated gamma-phospho-Glu-tRNA(Gln). The chain is Glutamyl-tRNA(Gln) amidotransferase subunit A from Gloeobacter violaceus (strain ATCC 29082 / PCC 7421).